Consider the following 183-residue polypeptide: uncharacterized protein (183 aa).

The next 4 helical transmembrane spans lie at 13–35 (KALLRLNLIAIALLWLYPLLTYS), 60–82 (LLILPAVFSIAPAIILIITKLRF), 117–139 (FEPVLLLSLILSAGFLGMEYAIF), and 149–171 (LLFYIILIFVIAAPLFIFFLYLS).

It is found in the cell membrane. This is an uncharacterized protein from Archaeoglobus fulgidus (strain ATCC 49558 / DSM 4304 / JCM 9628 / NBRC 100126 / VC-16).